We begin with the raw amino-acid sequence, 312 residues long: Protoheme IX farnesyltransferase 1 (312 aa).

The next 9 helical transmembrane spans lie at 21 to 41 (GVLA…LLVT), 53 to 73 (IPSP…AGSA), 105 to 125 (SALV…ALGA), 127 to 147 (LLAA…YTLV), 156 to 176 (IVWG…AVTG), 182 to 202 (ALVM…SLAM), 225 to 245 (VSAR…LLVP), 246 to 266 (ATSW…LIVA), and 292 to 312 (LALL…SFVA).

The protein belongs to the UbiA prenyltransferase family. Protoheme IX farnesyltransferase subfamily.

It is found in the cell membrane. It carries out the reaction heme b + (2E,6E)-farnesyl diphosphate + H2O = Fe(II)-heme o + diphosphate. It functions in the pathway porphyrin-containing compound metabolism; heme O biosynthesis; heme O from protoheme: step 1/1. Converts heme B (protoheme IX) to heme O by substitution of the vinyl group on carbon 2 of heme B porphyrin ring with a hydroxyethyl farnesyl side group. The polypeptide is Protoheme IX farnesyltransferase 1 (Saccharopolyspora erythraea (strain ATCC 11635 / DSM 40517 / JCM 4748 / NBRC 13426 / NCIMB 8594 / NRRL 2338)).